We begin with the raw amino-acid sequence, 100 residues long: UPF0213 protein YhbQ (100 aa).

The GIY-YIG domain maps to 2–77 (TPWFLYLIRT…KQLTKRQKER (76 aa)).

Belongs to the UPF0213 family.

The sequence is that of UPF0213 protein YhbQ from Escherichia coli O157:H7.